A 224-amino-acid chain; its full sequence is Iron-sulfur cluster repair protein ScdA (224 aa).

It belongs to the RIC family. ScdA subfamily. In terms of assembly, homodimer.

It localises to the cytoplasm. Di-iron-containing protein involved in the repair of iron-sulfur clusters damaged by oxidative and nitrosative stress conditions. This Staphylococcus epidermidis (strain ATCC 35984 / DSM 28319 / BCRC 17069 / CCUG 31568 / BM 3577 / RP62A) protein is Iron-sulfur cluster repair protein ScdA.